The chain runs to 420 residues: 3-phosphoshikimate 1-carboxyvinyltransferase (420 aa).

3-phosphoshikimate is bound by residues K26, S27, and R31. K26 provides a ligand contact to phosphoenolpyruvate. Phosphoenolpyruvate is bound by residues G97 and R125. S170, S171, Q172, D297, N320, and K324 together coordinate 3-phosphoshikimate. Position 172 (Q172) interacts with phosphoenolpyruvate. Residue D297 is the Proton acceptor of the active site. Residues R328, R375, and K400 each contribute to the phosphoenolpyruvate site.

This sequence belongs to the EPSP synthase family. As to quaternary structure, monomer.

The protein localises to the cytoplasm. It catalyses the reaction 3-phosphoshikimate + phosphoenolpyruvate = 5-O-(1-carboxyvinyl)-3-phosphoshikimate + phosphate. The protein operates within metabolic intermediate biosynthesis; chorismate biosynthesis; chorismate from D-erythrose 4-phosphate and phosphoenolpyruvate: step 6/7. In terms of biological role, catalyzes the transfer of the enolpyruvyl moiety of phosphoenolpyruvate (PEP) to the 5-hydroxyl of shikimate-3-phosphate (S3P) to produce enolpyruvyl shikimate-3-phosphate and inorganic phosphate. The chain is 3-phosphoshikimate 1-carboxyvinyltransferase from Rhizobium leguminosarum bv. trifolii (strain WSM2304).